The sequence spans 69 residues: Light-harvesting polypeptide B-800/860 alpha chain (69 aa).

Topologically, residues 1-14 are cytoplasmic; sequence MTNGKIWLVVKPTV. A helical membrane pass occupies residues 15–35; the sequence is GLPIGMLFAALLAVLIHGLLF. His31 is an a bacteriochlorophyll binding site. The Periplasmic portion of the chain corresponds to 36–69; that stretch reads VDGRLKSWWSEFPVAKPAVVSVQAAPAPVAAEVK.

This sequence belongs to the antenna complex alpha subunit family. The core complex is formed by different alpha and beta chains, binding bacteriochlorophyll molecules, and arranged most probably in tetrameric structures disposed around the reaction center. The non-pigmented gamma chains may constitute additional components.

The protein resides in the cell inner membrane. Antenna complexes are light-harvesting systems, which transfer the excitation energy to the reaction centers. In Rhodocyclus tenuis (Rhodospirillum tenue), this protein is Light-harvesting polypeptide B-800/860 alpha chain.